The chain runs to 50 residues: ATP synthase protein 8 (50 aa).

Residues 13–32 (ITFTFIILAITVYILSKYIL) form a helical membrane-spanning segment.

Belongs to the ATPase protein 8 family. F-type ATPases have 2 components, CF(1) - the catalytic core - and CF(0) - the membrane proton channel.

Its subcellular location is the mitochondrion membrane. Functionally, mitochondrial membrane ATP synthase (F(1)F(0) ATP synthase or Complex V) produces ATP from ADP in the presence of a proton gradient across the membrane which is generated by electron transport complexes of the respiratory chain. F-type ATPases consist of two structural domains, F(1) - containing the extramembraneous catalytic core and F(0) - containing the membrane proton channel, linked together by a central stalk and a peripheral stalk. During catalysis, ATP synthesis in the catalytic domain of F(1) is coupled via a rotary mechanism of the central stalk subunits to proton translocation. Part of the complex F(0) domain. Minor subunit located with subunit a in the membrane. The sequence is that of ATP synthase protein 8 (ATP8) from Podospora anserina (strain S / ATCC MYA-4624 / DSM 980 / FGSC 10383) (Pleurage anserina).